The primary structure comprises 209 residues: Large ribosomal subunit protein uL3 (209 aa).

Glutamine 150 carries the N5-methylglutamine modification.

The protein belongs to the universal ribosomal protein uL3 family. As to quaternary structure, part of the 50S ribosomal subunit. Forms a cluster with proteins L14 and L19. In terms of processing, methylated by PrmB.

In terms of biological role, one of the primary rRNA binding proteins, it binds directly near the 3'-end of the 23S rRNA, where it nucleates assembly of the 50S subunit. In Vibrio campbellii (strain ATCC BAA-1116), this protein is Large ribosomal subunit protein uL3.